Here is a 156-residue protein sequence, read N- to C-terminus: MRSSAKQEELVKAFKALLKEEKFSSQGEIVQALQEEGFENINQSKVSRMLTKFGAVRTRNAKMEMVYCLPAELGVPTTSSPLKNLVLDIDYNDAVVVIHTSPGAAQLIARLLDSLGKAEGILGSIAGDDTIFTTPARGFTVKDLHDAILVLFEQEL.

Belongs to the ArgR family.

The protein localises to the cytoplasm. The protein operates within amino-acid biosynthesis; L-arginine biosynthesis [regulation]. In terms of biological role, regulates arginine biosynthesis genes. This Klebsiella pneumoniae (strain 342) protein is Arginine repressor.